The sequence spans 511 residues: NAD(P)H-quinone oxidoreductase subunit 2, chloroplastic (511 aa).

Helical transmembrane passes span L15–F35, V39–L59, S78–S98, A108–G128, L132–Y152, L167–L187, F210–A230, P244–T264, W278–I298, M306–N326, L334–F354, V377–F397, G410–L430, and L466–I486.

This sequence belongs to the complex I subunit 2 family. NDH is composed of at least 16 different subunits, 5 of which are encoded in the nucleus.

The protein resides in the plastid. It is found in the chloroplast thylakoid membrane. The enzyme catalyses a plastoquinone + NADH + (n+1) H(+)(in) = a plastoquinol + NAD(+) + n H(+)(out). It catalyses the reaction a plastoquinone + NADPH + (n+1) H(+)(in) = a plastoquinol + NADP(+) + n H(+)(out). Functionally, NDH shuttles electrons from NAD(P)H:plastoquinone, via FMN and iron-sulfur (Fe-S) centers, to quinones in the photosynthetic chain and possibly in a chloroplast respiratory chain. The immediate electron acceptor for the enzyme in this species is believed to be plastoquinone. Couples the redox reaction to proton translocation, and thus conserves the redox energy in a proton gradient. This is NAD(P)H-quinone oxidoreductase subunit 2, chloroplastic from Chlorokybus atmophyticus (Soil alga).